The chain runs to 494 residues: Cytochrome P450 2A8 (494 aa).

Residue cysteine 439 participates in heme binding.

Belongs to the cytochrome P450 family. Heme serves as cofactor. In terms of tissue distribution, liver.

Its subcellular location is the endoplasmic reticulum membrane. It localises to the microsome membrane. The enzyme catalyses an organic molecule + reduced [NADPH--hemoprotein reductase] + O2 = an alcohol + oxidized [NADPH--hemoprotein reductase] + H2O + H(+). Its function is as follows. Highly active in 7-ethoxycoumarin O-deethylation, and benzphetamine N-demethylation; moderately active in testosterone 7-alpha-hydroxylation, ethylmorphine N-demethylation, p-nitroanisole O-demethylation; and only slightly active in benzopyrene 3-hydroxylation, 7-ethoxyresorufin O-deethylation, testosterone 2-alpha-hydroxylation and testosterone 17-oxidation. Competent in the metabolic activation of aflatoxin B1. The polypeptide is Cytochrome P450 2A8 (CYP2A8) (Mesocricetus auratus (Golden hamster)).